The chain runs to 155 residues: Small ribosomal subunit protein uS7cz/uS7cy (155 aa).

The protein belongs to the universal ribosomal protein uS7 family. In terms of assembly, part of the 30S ribosomal subunit.

It localises to the plastid. The protein localises to the chloroplast. One of the primary rRNA binding proteins, it binds directly to 16S rRNA where it nucleates assembly of the head domain of the 30S subunit. This Ipomoea purpurea (Common morning glory) protein is Small ribosomal subunit protein uS7cz/uS7cy (rps7-A).